Consider the following 172-residue polypeptide: Cystatin-like cysteine protease inhibitor EPIC4 (172 aa).

Residues 1 to 17 (MRASLSILVAFPALAAA) form the signal peptide. Residues 71–75 (QVVAG) carry the Secondary area of contact motif. The interval 129–172 (EAATASSSSTPAPTPASTSTSASSSEETMLQSSVQQRAMFSDFV) is disordered. Positions 130–156 (AATASSSSTPAPTPASTSTSASSSEET) are enriched in low complexity. Over residues 157–166 (MLQSSVQQRA) the composition is skewed to polar residues.

The protein belongs to the cystatin family.

It localises to the secreted. Secreted effector that interacts with and inhibits host apoplastic pathogenesis-related papain-like cysteine proteases. Inhibition of host proteases by a pathogen extracellular protease inhibitor forms a specific type of defense-counterdefense mechanism between plants and microbial pathogens. This is Cystatin-like cysteine protease inhibitor EPIC4 from Phytophthora infestans (Potato late blight agent).